The chain runs to 585 residues: FAD-linked oxidoreductase apf9 (585 aa).

Positions 1-19 (MKPHTVSLVLSNLASLAAA) are cleaved as a signal peptide. Asn40, Asn92, and Asn117 each carry an N-linked (GlcNAc...) asparagine glycan. The FAD-binding PCMH-type domain maps to 108 to 294 (IGNSPVYVVN…TEITVKTYPT (187 aa)). At His145 the chain carries Pros-8alpha-FAD histidine. 3 N-linked (GlcNAc...) asparagine glycosylation sites follow: Asn352, Asn412, and Asn495.

It belongs to the oxygen-dependent FAD-linked oxidoreductase family. It depends on FAD as a cofactor.

It participates in secondary metabolite biosynthesis. Functionally, FAD-linked oxidoreductase; part of the gene cluster that mediates the biosynthesis of the cyclic tetrapeptide apicidin F (APF). The non-ribosomal peptide synthetase apf1 incorporates four different amino acids to produce apicidin F: L-phenylalanine, D-pipecolic acid (D-pip), N-methoxy-L-tryptophan and L-2-aminooctanedioic acid. L-Phenylalanine is the only proteinogenic amino acid directly used by apf1. The 3 other apf1 substrates are non-proteinogenic and have to be modified by other enzymes of the cluster. Lysine is converted to delta-1-pyrroline-5-carboxylate (P5C) which is reduced to L-pipecolic acid (L-pip) by apf3. L-pip is epimerized to D-pip, probably by apf1 activity, prior to incorporation. L-Tryptophan is N-oxidyzed by one of the cytochrome P450 monooxygenases (apf7 or apf8), and further methylated at the hydroxy group by the O-methyltransferase apf6 to yield N-methoxy-L-tryptophan. The synthesis of the fourth apf1 substrate is more complex. The fatty acid synthase apf5 is involved in the synthesis of the octanoic acid backbone of L-2-aminooctanedioic acid by fixing one acetyl-CoA unit and three malonyl-CoA units. Then one of the cytochrome P450 monooxygenases (apf7 or apf8) may oxidize this backbone to 2-oxooctanoic acid. The aminotransferase apf4 is predicted to catalyze the exchange of the keto group with an amino group. The next step would be the oxidation of 2-aminooctanoic acid by one of the cytochrome P450 monooxygenases (apf7 or apf8). The last step is the oxidation of 2-amino-8-hydroxyoctanoic acid to 2-aminooctanedioic acid is catalyzed by the FAD-dependent monooxygenase apf9. The sequence is that of FAD-linked oxidoreductase apf9 from Gibberella fujikuroi (strain CBS 195.34 / IMI 58289 / NRRL A-6831) (Bakanae and foot rot disease fungus).